A 132-amino-acid polypeptide reads, in one-letter code: Small ribosomal subunit protein uS8 (132 aa).

This sequence belongs to the universal ribosomal protein uS8 family. Part of the 30S ribosomal subunit. Contacts proteins S5 and S12.

In terms of biological role, one of the primary rRNA binding proteins, it binds directly to 16S rRNA central domain where it helps coordinate assembly of the platform of the 30S subunit. The polypeptide is Small ribosomal subunit protein uS8 (Streptococcus mutans serotype c (strain ATCC 700610 / UA159)).